We begin with the raw amino-acid sequence, 483 residues long: MSKNNEEFVKEITPQSEDYSQWYLDVIKKTKLVDYAPVKGCMVIRPYGYAIWEKMKEGLDRRIKETGHENAYFPLFIPESLLQKEADHVEGFAPEVAWITKGGDEELSESLAVRPTSEAMFGEMYSDWIQSWRDLPVLINQWANVVRWEKSTKPFLRTSEFLWQEGHTAHRTEEDAEEEALQMLDVYKDFVENDMAIPVLNGLKSEKEKFAGALRTFCIEALMSDGRALQAGTSHNLGQHFAKVFDITFLDQDDERKYVWQTSWGVSTRLIGALIMVHGDNRGLKIPPKVAPHQLVMVPITPKKQREQVLEESDKLYQELKDKFRVKLDNREEHTPGWKFNEWEMKGVPIRLEIGPKDIEKDQVVLVRRDTDEKMFVKRDELIDKLEELIEDIQNKMLQTAKNFLEENTHTASSLDELGQILEQKRGMIKAYWCGNQACEEKVKDDTKATIRVIPFEAETGGSCIACGYHNDDNKEVFFARAY.

This sequence belongs to the class-II aminoacyl-tRNA synthetase family. ProS type 3 subfamily. In terms of assembly, homodimer.

The protein resides in the cytoplasm. The catalysed reaction is tRNA(Pro) + L-proline + ATP = L-prolyl-tRNA(Pro) + AMP + diphosphate. Its function is as follows. Catalyzes the attachment of proline to tRNA(Pro) in a two-step reaction: proline is first activated by ATP to form Pro-AMP and then transferred to the acceptor end of tRNA(Pro). In Natranaerobius thermophilus (strain ATCC BAA-1301 / DSM 18059 / JW/NM-WN-LF), this protein is Proline--tRNA ligase.